A 78-amino-acid polypeptide reads, in one-letter code: Probable [Fe-S]-dependent transcriptional repressor (78 aa).

Residues cysteine 56, cysteine 61, cysteine 64, and cysteine 70 each coordinate iron-sulfur cluster.

It belongs to the FeoC family.

Functionally, may function as a transcriptional regulator that controls feoABC expression. The polypeptide is Probable [Fe-S]-dependent transcriptional repressor (Escherichia coli (strain UTI89 / UPEC)).